We begin with the raw amino-acid sequence, 183 residues long: MSQPPKILLLYAHPEPQDSVANRVLLQPAQQLANVTVHDLYAHYPDFFIDIHHEQQLLREHQIIVFQHPFYTYSCPALLKEWLDRVLSRGFANGIGGNALAGKYWRSVITTGEPEDAYHADGNNRYPMDDLLRPFELTAAMCRMHWMRPMIVYWARRLQPDVLSSQARAYGEWLSSPLPEEER.

Belongs to the NAD(P)H dehydrogenase (quinone) family. KefG subfamily. Interacts with KefB.

It is found in the cell inner membrane. The enzyme catalyses a quinone + NADH + H(+) = a quinol + NAD(+). It catalyses the reaction a quinone + NADPH + H(+) = a quinol + NADP(+). In terms of biological role, regulatory subunit of a potassium efflux system that confers protection against electrophiles. Required for full activity of KefB. This Pectobacterium atrosepticum (strain SCRI 1043 / ATCC BAA-672) (Erwinia carotovora subsp. atroseptica) protein is Glutathione-regulated potassium-efflux system ancillary protein KefG.